Consider the following 833-residue polypeptide: Leucine--tRNA ligase (833 aa).

The short motif at 41–52 (PYPSGAGLHVGH) is the 'HIGH' region element. The 'KMSKS' region motif lies at 610–614 (KMSKS). K613 contacts ATP.

It belongs to the class-I aminoacyl-tRNA synthetase family.

It is found in the cytoplasm. The catalysed reaction is tRNA(Leu) + L-leucine + ATP = L-leucyl-tRNA(Leu) + AMP + diphosphate. In Streptococcus pyogenes serotype M3 (strain ATCC BAA-595 / MGAS315), this protein is Leucine--tRNA ligase.